Here is a 150-residue protein sequence, read N- to C-terminus: Urease accessory protein UreE (150 aa).

Belongs to the UreE family.

The protein localises to the cytoplasm. In terms of biological role, involved in urease metallocenter assembly. Binds nickel. Probably functions as a nickel donor during metallocenter assembly. In Staphylococcus carnosus (strain TM300), this protein is Urease accessory protein UreE.